We begin with the raw amino-acid sequence, 111 residues long: Protein YibV (111 aa).

This chain is Protein YibV (yibV), found in Escherichia coli O157:H7.